We begin with the raw amino-acid sequence, 336 residues long: tRNA N6-adenosine threonylcarbamoyltransferase (336 aa).

Fe cation is bound by residues H112 and H116. Residues 136-140, D169, G182, and N276 contribute to the substrate site; that span reads LVSGG. Fe cation is bound at residue D304.

Belongs to the KAE1 / TsaD family. It depends on Fe(2+) as a cofactor.

The protein localises to the cytoplasm. It catalyses the reaction L-threonylcarbamoyladenylate + adenosine(37) in tRNA = N(6)-L-threonylcarbamoyladenosine(37) in tRNA + AMP + H(+). Its function is as follows. Required for the formation of a threonylcarbamoyl group on adenosine at position 37 (t(6)A37) in tRNAs that read codons beginning with adenine. Is involved in the transfer of the threonylcarbamoyl moiety of threonylcarbamoyl-AMP (TC-AMP) to the N6 group of A37, together with TsaE and TsaB. TsaD likely plays a direct catalytic role in this reaction. This chain is tRNA N6-adenosine threonylcarbamoyltransferase, found in Francisella tularensis subsp. novicida (strain U112).